The sequence spans 548 residues: Chaperonin GroEL (548 aa).

ATP-binding positions include 29–32 (THGP), Lys-50, 86–90 (DGTTT), Gly-414, and Asp-493.

The protein belongs to the chaperonin (HSP60) family. Forms a cylinder of 14 subunits composed of two heptameric rings stacked back-to-back. Interacts with the co-chaperonin GroES.

The protein resides in the cytoplasm. The enzyme catalyses ATP + H2O + a folded polypeptide = ADP + phosphate + an unfolded polypeptide.. Functionally, together with its co-chaperonin GroES, plays an essential role in assisting protein folding. The GroEL-GroES system forms a nano-cage that allows encapsulation of the non-native substrate proteins and provides a physical environment optimized to promote and accelerate protein folding. The protein is Chaperonin GroEL of Desulfatibacillum aliphaticivorans.